The primary structure comprises 513 residues: V-type proton ATPase subunit B, kidney isoform (513 aa).

Residue R394 participates in ATP binding. The PDZ-binding signature appears at 510–513; that stretch reads DTAL.

Belongs to the ATPase alpha/beta chains family. As to quaternary structure, V-ATPase is a heteromultimeric enzyme made up of two complexes: the ATP-hydrolytic V1 complex and the proton translocation V0 complex. The V1 complex consists of three catalytic AB heterodimers that form a heterohexamer, three peripheral stalks each consisting of EG heterodimers, one central rotor including subunits D and F, and the regulatory subunits C and H. The proton translocation complex V0 consists of the proton transport subunit a, a ring of proteolipid subunits c9c'', rotary subunit d, subunits e and f, and the accessory subunits ATP6AP1/Ac45 and ATP6AP2/PRR. Forms a complex with NHERF1 and SCL4A7. As to expression, kidney cortex and medulla.

It is found in the apical cell membrane. It localises to the basolateral cell membrane. Non-catalytic subunit of the V1 complex of vacuolar(H+)-ATPase (V-ATPase), a multisubunit enzyme composed of a peripheral complex (V1) that hydrolyzes ATP and a membrane integral complex (V0) that translocates protons. V-ATPase is responsible for acidifying and maintaining the pH of intracellular compartments and in some cell types, is targeted to the plasma membrane, where it is responsible for acidifying the extracellular environment. Essential for the proper assembly and activity of V-ATPase. In renal intercalated cells, mediates secretion of protons (H+) into the urine thereby ensuring correct urinary acidification. Required for optimal olfactory function by mediating the acidification of the nasal olfactory epithelium. The protein is V-type proton ATPase subunit B, kidney isoform (ATP6V1B1) of Bos taurus (Bovine).